The primary structure comprises 632 residues: Phosphomethylpyrimidine synthase (632 aa).

The span at 1–23 (MNIRSNPQQTVPAVTTGPLSSSR) shows a compositional bias: polar residues. The disordered stretch occupies residues 1-26 (MNIRSNPQQTVPAVTTGPLSSSRKIF). Residues N221, M250, Y279, H315, 335–337 (SRG), 376–379 (DGLR), and E415 each bind substrate. H419 lines the Zn(2+) pocket. Y442 provides a ligand contact to substrate. Zn(2+) is bound at residue H483. Residues C563, C566, and C571 each contribute to the [4Fe-4S] cluster site.

It belongs to the ThiC family. In terms of assembly, homodimer. [4Fe-4S] cluster serves as cofactor.

It catalyses the reaction 5-amino-1-(5-phospho-beta-D-ribosyl)imidazole + S-adenosyl-L-methionine = 4-amino-2-methyl-5-(phosphooxymethyl)pyrimidine + CO + 5'-deoxyadenosine + formate + L-methionine + 3 H(+). The protein operates within cofactor biosynthesis; thiamine diphosphate biosynthesis. Catalyzes the synthesis of the hydroxymethylpyrimidine phosphate (HMP-P) moiety of thiamine from aminoimidazole ribotide (AIR) in a radical S-adenosyl-L-methionine (SAM)-dependent reaction. This Bradyrhizobium diazoefficiens (strain JCM 10833 / BCRC 13528 / IAM 13628 / NBRC 14792 / USDA 110) protein is Phosphomethylpyrimidine synthase.